Consider the following 212-residue polypeptide: High frequency lysogenization protein HflD homolog (212 aa).

A coiled-coil region spans residues 92–128; sequence LIALERKLNAKSAALDELGKRIGQLERQLEHFELLSE.

The protein belongs to the HflD family.

The protein resides in the cytoplasm. The protein localises to the cell inner membrane. The chain is High frequency lysogenization protein HflD homolog from Pectobacterium atrosepticum (strain SCRI 1043 / ATCC BAA-672) (Erwinia carotovora subsp. atroseptica).